The following is a 161-amino-acid chain: Protein-export protein SecB (161 aa).

It belongs to the SecB family. As to quaternary structure, homotetramer, a dimer of dimers. One homotetramer interacts with 1 SecA dimer.

Its subcellular location is the cytoplasm. Functionally, one of the proteins required for the normal export of preproteins out of the cell cytoplasm. It is a molecular chaperone that binds to a subset of precursor proteins, maintaining them in a translocation-competent state. It also specifically binds to its receptor SecA. The polypeptide is Protein-export protein SecB (Shewanella sp. (strain ANA-3)).